The following is a 233-amino-acid chain: Ion-translocating oxidoreductase complex subunit E (233 aa).

6 consecutive transmembrane segments (helical) span residues 18–38, 39–59, 69–89, 92–112, 128–148, and 182–202; these read ALVQLLGLCPLLAVSSTATNA, LGLGLATTLVLVCTNTAVSAL, IPIYVMIIASVVSTVQMLINA, FGLYQSLGIFIPLIVTNCIVI, ALDGFAMGMGATCALFVLGAL, and PFLLAMLPPGAFIGLGLLLAG.

Belongs to the NqrDE/RnfAE family. As to quaternary structure, the complex is composed of six subunits: RnfA, RnfB, RnfC, RnfD, RnfE and RnfG.

It localises to the cell inner membrane. Its function is as follows. Part of a membrane-bound complex that couples electron transfer with translocation of ions across the membrane. The sequence is that of Ion-translocating oxidoreductase complex subunit E from Yersinia pseudotuberculosis serotype O:1b (strain IP 31758).